Reading from the N-terminus, the 443-residue chain is Packaging protein 1 (443 aa).

The interval 1–75 (MSGAADGTVP…PEAAQPPPSR (75 aa)) is disordered. A compositionally biased stretch (basic and acidic residues) spans 13–56 (EDTHQEDSGERECEQRPVHSGREATGESDPALERPDHGERHGPE). Residue 169 to 176 (GPTGSGKS) coordinates ATP. The tract at residues 433–443 (VSYANKRKWYD) is DNA-binding.

The protein belongs to the adenoviridae packaging protein 1 family. In terms of assembly, homodimer. Part of a genome packaging complex composed of packaging proteins 1, 2 and 3; this complex specifically binds to the packaging sequence on the left end of viral genomic DNA and performs packaging of the viral genome. Interacts with protein 33K.

Its subcellular location is the virion. The protein localises to the host nucleus. It is found in the host nucleoplasm. The protein resides in the host nucleolus. Its function is as follows. Component of the packaging machinery which encapsidates the viral DNA into preformed capsids and transcriptional activator of the viral major late promoter (MLP). Binds, along with packaging proteins 2 and 3, to the specific packaging sequence on the left end of viral genomic DNA and displays ATPase activity thereby providing the power stroke of the packaging machinery. The activity of packaging protein IVa2 is stimulated by protein 33K which acts as a terminase. May be the protein that pumps DNA into the capsid powered by ATP hydrolysis. Specifically binds to the 5'-CG-3' nucleotides of the repeats making up the packaging sequence. Component of the DEF-A and DEF-B transcription factors that bind downstream elements of the major late promoter (MLP), and stimulate transcription from the MLP after initiation of viral DNA replication. DEF-A is a heterodimer packaging proteins 1 and 2 and DEF-B is a homodimer of packaging protein 1. The chain is Packaging protein 1 from Pantherophis guttatus (Corn snake).